Here is a 352-residue protein sequence, read N- to C-terminus: Putative conjugal transfer protein MT3759 (352 aa).

Gly-160–Thr-167 serves as a coordination point for ATP.

The protein belongs to the GSP E family.

The protein localises to the cytoplasm. The chain is Putative conjugal transfer protein MT3759 from Mycobacterium tuberculosis (strain CDC 1551 / Oshkosh).